We begin with the raw amino-acid sequence, 560 residues long: Choline/ethanolamine transporter FLVCR1 (560 aa).

The tract at residues 1–43 (MARPDDEVGPAVAPGHPLGKGYLPVPKGAPDGEARLVPQNGPE) is disordered. Over 1 to 92 (MARPDDEVGP…EDVPCPACPP (92 aa)) the chain is Cytoplasmic. A helical membrane pass occupies residues 93-117 (RTALSPRRFVVLLIFSLYSLVNAFQ). At 118–135 (WIQYSSISNVFEDFYEVS) the chain is on the extracellular side. Residues 136–163 (PLHINWLSMVYMVAYVPLIFPATWLLDT) traverse the membrane as a helical segment. Residues 164 to 165 (RG) are Cytoplasmic-facing. The chain crosses the membrane as a helical span at residues 166–185 (LRLTALLGSGLNCLGAWVKC). Residues 186-192 (GSVQRHL) are Extracellular-facing. The helical transmembrane segment at 193-221 (FWVTMLGQILCSVAQVFILGLPSPVASVW) threads the bilayer. Gln207 provides a ligand contact to ethanolamine. At 222–226 (FGPKE) the chain is on the cytoplasmic side. The chain crosses the membrane as a helical span at residues 227 to 252 (VSTACATAVLGNQLGTAVGFLLPPVL). At 253 to 270 (VPALGTQNSTGLLAHTQN) the chain is on the extracellular side. An N-linked (GlcNAc...) asparagine glycan is attached at Asn270. A helical transmembrane segment spans residues 271 to 300 (NTDLLAHNINTMFYGTAFISTFLFFLTIIA). Residues 301 to 336 (FKEKPPLPPSQAQAVLRDSPPEEYSYKSSIWNLCRN) are Cytoplasmic-facing. The chain crosses the membrane as a helical span at residues 337 to 367 (IPFVLLLVSYGIMTGAFYSISTLLNQIILTY). Over 368–371 (YVGE) the chain is Extracellular. The chain crosses the membrane as a helical span at residues 372 to 400 (EVNAGRIGLTLVVAGMVGSILCGLWLDYT). Residues 401–402 (KT) are Cytoplasmic-facing. A helical membrane pass occupies residues 403-425 (YKQTTLIVYVLSFIGMLIFTFTL). Topologically, residues 426–428 (NLG) are extracellular. The helical transmembrane segment at 429 to 458 (YIIVVFFTGGILGFFMTGYLPLGFEFAVEI) threads the bilayer. At 459–466 (TYPESEGM) the chain is on the cytoplasmic side. Residues 467–492 (SSGLLNTAAQILGIFFTLAQGKITTD) traverse the membrane as a helical segment. Gln476 is a binding site for ethanolamine. Gln476 contributes to the choline binding site. Residues 493–495 (YNS) lie on the Extracellular side of the membrane. Residues 496–518 (PEAGNIFLCAWMFVGIILTALIK) traverse the membrane as a helical segment. The Cytoplasmic portion of the chain corresponds to 519–560 (SDLRRHNINTGLTNIDVKAVPVDSRVDPKPKVMVSIQSESSL). Ser542 carries the phosphoserine modification.

Belongs to the major facilitator superfamily. Feline leukemia virus subgroup C receptor (TC 2.A.1.28.1) family.

The protein resides in the cell membrane. The protein localises to the mitochondrion membrane. The catalysed reaction is choline(out) = choline(in). It catalyses the reaction ethanolamine(in) = ethanolamine(out). It carries out the reaction heme b(in) = heme b(out). Its function is as follows. Uniporter that mediates the transport of extracellular choline and ethanolamine into cells, thereby playing a key role in phospholipid biosynthesis. Choline and ethanolamine are the precursors of phosphatidylcholine and phosphatidylethanolamine, respectively, the two most abundant phospholipids. Transport is not coupled with proton transport and is exclusively driven by the choline (or ethanolamine) gradient across the plasma membrane. Also acts as a heme b transporter that mediates heme efflux from the cytoplasm to the extracellular compartment. Uniporter that mediates the transport of extracellular choline and ethanolamine into cells. Choline and ethanolamine are the precursors of phosphatidylcholine and phosphatidylethanolamine, respectively, the two most abundant phospholipids. Transport is not coupled with proton transport and is exclusively driven by the choline (or ethanolamine) gradient across the plasma membrane. Also acts as a heme b transporter that mediates heme efflux from the cytoplasm to the extracellular compartment. Heme export depends on the presence of HPX and is required to maintain intracellular free heme balance, protecting cells from heme toxicity. Heme export provides protection from heme or ferrous iron toxicities in liver, brain, sensory neurons and during erythropoiesis, a process in which heme synthesis intensifies. Possibly export coproporphyrin and protoporphyrin IX, which are both intermediate products in the heme biosynthetic pathway. Does not export bilirubin. The molecular mechanism of heme transport, whether electrogenic, electroneutral or coupled to other ions, remains to be elucidated. Functionally, heme transporter that promotes heme efflux from the mitochondrion to the cytoplasm. Essential for erythroid differentiation. This Mus musculus (Mouse) protein is Choline/ethanolamine transporter FLVCR1 (Flvcr1).